We begin with the raw amino-acid sequence, 133 residues long: Phosphoribosyl-AMP cyclohydrolase (133 aa).

Residue aspartate 77 coordinates Mg(2+). Cysteine 78 provides a ligand contact to Zn(2+). Residues aspartate 79 and aspartate 81 each coordinate Mg(2+). Residues cysteine 95 and cysteine 102 each contribute to the Zn(2+) site.

The protein belongs to the PRA-CH family. As to quaternary structure, homodimer. Requires Mg(2+) as cofactor. The cofactor is Zn(2+).

It is found in the cytoplasm. It carries out the reaction 1-(5-phospho-beta-D-ribosyl)-5'-AMP + H2O = 1-(5-phospho-beta-D-ribosyl)-5-[(5-phospho-beta-D-ribosylamino)methylideneamino]imidazole-4-carboxamide. The protein operates within amino-acid biosynthesis; L-histidine biosynthesis; L-histidine from 5-phospho-alpha-D-ribose 1-diphosphate: step 3/9. Functionally, catalyzes the hydrolysis of the adenine ring of phosphoribosyl-AMP. In Azotobacter chroococcum mcd 1, this protein is Phosphoribosyl-AMP cyclohydrolase.